A 377-amino-acid polypeptide reads, in one-letter code: MNKEQLKTPFFMIDEAKLIQNLEIAKQLKEISGVKLVLALKCFSTWGVFDIIKPYLDGTTSSGPFEVKLGYEKFGGETHAYSVGYSEDDVREVADLCDKIIFNSQSQLAAHRHIVEGKASIGLRLNPGVSYASQDLANPARQFSRLGVQADHIDPAVFDSINGVMFHMNCENKDVDAFIALLDSISERFGAYLNKLDWVSMGGGVFFTWPGYDVEKLGLALKAFSEKHGVQMYLEPGEAIITKTTDLVVTVVDLVENGMKTAIVDSATEAHRLDTLIYKEPASVLEASENGEHEYVIGSCSCLAGDQFCVAKFDQPLHVGQRLHILDSAGYTMVKLNWFNGLKMPSVYCERTNGEIQKLNEFGYEDFKRSLSLWSVQ.

Lys41 carries the post-translational modification N6-(pyridoxal phosphate)lysine. Substrate contacts are provided by Glu238 and Asp274.

This sequence belongs to the Orn/Lys/Arg decarboxylase class-II family. NspC subfamily. Homodimer. Pyridoxal 5'-phosphate serves as cofactor.

The protein resides in the cytoplasm. The enzyme catalyses carboxynorspermidine + H(+) = norspermidine + CO2. It catalyses the reaction carboxyspermidine + H(+) = spermidine + CO2. Catalyzes the decarboxylation of carboxynorspermidine and carboxyspermidine. Carboxynorspermidine is decarboxylated 20-fold more efficiently than carboxyspermidine. Exhibits some activity with L-ornithine, but shows no activity with L-arginine, L-lysine or meso-diaminopimelate. This chain is Carboxynorspermidine/carboxyspermidine decarboxylase, found in Vibrio vulnificus (strain CMCP6).